A 342-amino-acid chain; its full sequence is Holliday junction branch migration complex subunit RuvB (342 aa).

The large ATPase domain (RuvB-L) stretch occupies residues Met1–Tyr179. Residues Ile18, Arg19, Gly60, Lys63, Thr64, Thr65, Glu126 to Phe128, Arg169, Tyr179, and Arg216 contribute to the ATP site. Thr64 serves as a coordination point for Mg(2+). Positions Asn180–Glu250 are small ATPAse domain (RuvB-S). The segment at Arg253–Glu342 is head domain (RuvB-H). Residues Arg289, Arg308, and Arg313 each contribute to the DNA site.

Belongs to the RuvB family. As to quaternary structure, homohexamer. Forms an RuvA(8)-RuvB(12)-Holliday junction (HJ) complex. HJ DNA is sandwiched between 2 RuvA tetramers; dsDNA enters through RuvA and exits via RuvB. An RuvB hexamer assembles on each DNA strand where it exits the tetramer. Each RuvB hexamer is contacted by two RuvA subunits (via domain III) on 2 adjacent RuvB subunits; this complex drives branch migration. In the full resolvosome a probable DNA-RuvA(4)-RuvB(12)-RuvC(2) complex forms which resolves the HJ.

Its subcellular location is the cytoplasm. It catalyses the reaction ATP + H2O = ADP + phosphate + H(+). The RuvA-RuvB-RuvC complex processes Holliday junction (HJ) DNA during genetic recombination and DNA repair, while the RuvA-RuvB complex plays an important role in the rescue of blocked DNA replication forks via replication fork reversal (RFR). RuvA specifically binds to HJ cruciform DNA, conferring on it an open structure. The RuvB hexamer acts as an ATP-dependent pump, pulling dsDNA into and through the RuvAB complex. RuvB forms 2 homohexamers on either side of HJ DNA bound by 1 or 2 RuvA tetramers; 4 subunits per hexamer contact DNA at a time. Coordinated motions by a converter formed by DNA-disengaged RuvB subunits stimulates ATP hydrolysis and nucleotide exchange. Immobilization of the converter enables RuvB to convert the ATP-contained energy into a lever motion, pulling 2 nucleotides of DNA out of the RuvA tetramer per ATP hydrolyzed, thus driving DNA branch migration. The RuvB motors rotate together with the DNA substrate, which together with the progressing nucleotide cycle form the mechanistic basis for DNA recombination by continuous HJ branch migration. Branch migration allows RuvC to scan DNA until it finds its consensus sequence, where it cleaves and resolves cruciform DNA. This is Holliday junction branch migration complex subunit RuvB from Rickettsia rickettsii (strain Sheila Smith).